The following is an 89-amino-acid chain: Small ribosomal subunit protein uS15 (89 aa).

This sequence belongs to the universal ribosomal protein uS15 family. As to quaternary structure, part of the 30S ribosomal subunit. Forms a bridge to the 50S subunit in the 70S ribosome, contacting the 23S rRNA.

One of the primary rRNA binding proteins, it binds directly to 16S rRNA where it helps nucleate assembly of the platform of the 30S subunit by binding and bridging several RNA helices of the 16S rRNA. Functionally, forms an intersubunit bridge (bridge B4) with the 23S rRNA of the 50S subunit in the ribosome. The sequence is that of Small ribosomal subunit protein uS15 from Photorhabdus luminescens (Xenorhabdus luminescens).